The sequence spans 56 residues: Large ribosomal subunit protein eL37 (56 aa).

Zn(2+) contacts are provided by cysteine 19, cysteine 22, cysteine 34, and cysteine 37. The C4-type zinc finger occupies 19 to 37 (CRRCGSVSFNVHTKQCTSC).

It belongs to the eukaryotic ribosomal protein eL37 family. Zn(2+) is required as a cofactor.

In terms of biological role, binds to the 23S rRNA. This Methanosarcina acetivorans (strain ATCC 35395 / DSM 2834 / JCM 12185 / C2A) protein is Large ribosomal subunit protein eL37 (rpl37e).